Reading from the N-terminus, the 457-residue chain is Polygalacturonase-2 (457 aa).

The signal sequence occupies residues 1-24; the sequence is MVIQRNSILLLIIIFASSISTCRS. The propeptide occupies 25 to 71; it reads NVIDDNLFKQVYDNILEQEFAHDFQAYLSYLSKNIESNNNIDKVDKN. Asparagine 189 and asparagine 240 each carry an N-linked (GlcNAc...) asparagine glycan. PbH1 repeat units follow at residues 228–255 and 256–277; these read SCTN…HVSN and TQYI…SIVS. The active-site Proton donor is aspartate 270. Asparagine 286 carries an N-linked (GlcNAc...) asparagine glycan. Residue histidine 293 is part of the active site. PbH1 repeat units follow at residues 309–330 and 338–359; these read VSNV…RIKT and ASNI…IIDQ. Residue asparagine 311 is glycosylated (N-linked (GlcNAc...) asparagine). Residues 445 to 457 constitute a propeptide that is removed on maturation; it reads LEISEDEALLYNY.

Belongs to the glycosyl hydrolase 28 family. As to quaternary structure, monomer PG2 (isoenzymes PG2A and PG2B). Also forms heterodimers called polygalacturonase 1 (PG1) with the beta subunit GP1. Post-translationally, N-glycosylated. PG2B isozyme has a greater degree of glycosylation than PG2A. Expressed only in ripening fruits (at protein level).

It is found in the secreted. Its subcellular location is the extracellular space. The protein localises to the apoplast. The protein resides in the cell wall. It carries out the reaction (1,4-alpha-D-galacturonosyl)n+m + H2O = (1,4-alpha-D-galacturonosyl)n + (1,4-alpha-D-galacturonosyl)m.. Its function is as follows. Catalytic subunit of the polygalacturonase isozyme 1 and 2 (PG1 and PG2). Acts in concert with the pectinesterase, in the ripening process. Is involved in cell wall metabolism, specifically in polyuronide degradation. The depolymerization and solubilization of cell wall polyuronides mediated by PG2 during ripening seems to be limited by the beta subunit GP1, probably by recruiting PG2 to form PG1. The polypeptide is Polygalacturonase-2 (PG2) (Solanum lycopersicum (Tomato)).